Reading from the N-terminus, the 466-residue chain is Argininosuccinate lyase (466 aa).

This sequence belongs to the lyase 1 family. Argininosuccinate lyase subfamily.

It is found in the cytoplasm. The catalysed reaction is 2-(N(omega)-L-arginino)succinate = fumarate + L-arginine. It functions in the pathway amino-acid biosynthesis; L-arginine biosynthesis; L-arginine from L-ornithine and carbamoyl phosphate: step 3/3. This is Argininosuccinate lyase from Synechococcus sp. (strain ATCC 27144 / PCC 6301 / SAUG 1402/1) (Anacystis nidulans).